The primary structure comprises 120 residues: Peptidyl-tRNA hydrolase (120 aa).

It belongs to the PTH2 family.

It is found in the cytoplasm. The enzyme catalyses an N-acyl-L-alpha-aminoacyl-tRNA + H2O = an N-acyl-L-amino acid + a tRNA + H(+). Functionally, the natural substrate for this enzyme may be peptidyl-tRNAs which drop off the ribosome during protein synthesis. This is Peptidyl-tRNA hydrolase from Saccharolobus islandicus (strain Y.N.15.51 / Yellowstone #2) (Sulfolobus islandicus).